A 387-amino-acid chain; its full sequence is S-adenosylmethionine synthase (387 aa).

His16 is a binding site for ATP. Asp18 lines the Mg(2+) pocket. Residue Glu44 coordinates K(+). L-methionine is bound by residues Glu57 and Gln100. Residues 100 to 110 (QSPDIAQGVDR) are flexible loop. Residues 167–169 (DAK), 232–233 (RF), Asp241, 247–248 (RK), Ala264, and Lys268 contribute to the ATP site. Residue Asp241 participates in L-methionine binding. Lys272 contacts L-methionine.

The protein belongs to the AdoMet synthase family. As to quaternary structure, homotetramer; dimer of dimers. Mg(2+) is required as a cofactor. K(+) serves as cofactor.

It localises to the cytoplasm. It carries out the reaction L-methionine + ATP + H2O = S-adenosyl-L-methionine + phosphate + diphosphate. It functions in the pathway amino-acid biosynthesis; S-adenosyl-L-methionine biosynthesis; S-adenosyl-L-methionine from L-methionine: step 1/1. Its function is as follows. Catalyzes the formation of S-adenosylmethionine (AdoMet) from methionine and ATP. The overall synthetic reaction is composed of two sequential steps, AdoMet formation and the subsequent tripolyphosphate hydrolysis which occurs prior to release of AdoMet from the enzyme. The protein is S-adenosylmethionine synthase of Cupriavidus pinatubonensis (strain JMP 134 / LMG 1197) (Cupriavidus necator (strain JMP 134)).